Reading from the N-terminus, the 199-residue chain is Nucleoside triphosphate pyrophosphatase (199 aa).

Aspartate 76 (proton acceptor) is an active-site residue.

Belongs to the Maf family. The cofactor is a divalent metal cation.

The protein localises to the cytoplasm. It catalyses the reaction a ribonucleoside 5'-triphosphate + H2O = a ribonucleoside 5'-phosphate + diphosphate + H(+). It carries out the reaction a 2'-deoxyribonucleoside 5'-triphosphate + H2O = a 2'-deoxyribonucleoside 5'-phosphate + diphosphate + H(+). In terms of biological role, nucleoside triphosphate pyrophosphatase. May have a dual role in cell division arrest and in preventing the incorporation of modified nucleotides into cellular nucleic acids. The protein is Nucleoside triphosphate pyrophosphatase of Ruegeria sp. (strain TM1040) (Silicibacter sp.).